Consider the following 246-residue polypeptide: 5-oxoprolinase subunit A (246 aa).

Belongs to the LamB/PxpA family. As to quaternary structure, forms a complex composed of PxpA, PxpB and PxpC.

The enzyme catalyses 5-oxo-L-proline + ATP + 2 H2O = L-glutamate + ADP + phosphate + H(+). In terms of biological role, catalyzes the cleavage of 5-oxoproline to form L-glutamate coupled to the hydrolysis of ATP to ADP and inorganic phosphate. The polypeptide is 5-oxoprolinase subunit A (Cupriavidus pinatubonensis (strain JMP 134 / LMG 1197) (Cupriavidus necator (strain JMP 134))).